A 503-amino-acid polypeptide reads, in one-letter code: Type II secretion system ATPase E (503 aa).

Positions 397, 400, 430, and 433 each coordinate Zn(2+).

It belongs to the GSP E family. As to quaternary structure, forms homooligomers; most probably hexamers. Interacts with EpsL/GspL. The cofactor is Zn(2+).

It localises to the cell inner membrane. The enzyme catalyses ATP + H2O + cellular proteinSide 1 = ADP + phosphate + cellular proteinSide 2.. ATPase component of the type II secretion system required for the energy-dependent secretion of extracellular factors such as proteases and toxins from the periplasm. Acts as a molecular motor to provide the energy that is required for assembly of the pseudopilus and the extrusion of substrates generated in the cytoplasm. In Vibrio cholerae serotype O1 (strain ATCC 39315 / El Tor Inaba N16961), this protein is Type II secretion system ATPase E (epsE).